We begin with the raw amino-acid sequence, 988 residues long: Transposase for transposon Tn21 (988 aa).

Residues 672-696 form a disordered region; it reads GDGTTSSSDEQNFRTASKAKSTGHI. Positions 674 to 695 are enriched in polar residues; the sequence is GTTSSSDEQNFRTASKAKSTGH.

Belongs to the transposase 7 family.

Required for transposition of transposon Tn21. This is Transposase for transposon Tn21 (tnpA) from Escherichia coli.